Here is a 232-residue protein sequence, read N- to C-terminus: MKIAIIQFGGTNCDMDVLHVLKDVVGVDAETVWYKEENLTGFDGVVVPGGFSYGDYLRAGAIAARTPIMDSVKKIAAEGKPVLGICNGFQVLTEARLLAGALTTNEYPKFRCHWTNLRVETADTPFTSKFRKGEVIRMPIAHMEGKFYAEESTLAELDENEQVVFRYVDEKGRVTDEANPNGSLENIAGILNASRNILGLMPHPERASESILGSDDGRKVFESMADYITENF.

A Glutamine amidotransferase type-1 domain is found at 2-232 (KIAIIQFGGT…SMADYITENF (231 aa)). Residue Cys-86 is the Nucleophile of the active site. Active-site residues include His-203 and Glu-205.

Part of the FGAM synthase complex composed of 1 PurL, 1 PurQ and 2 PurS subunits.

Its subcellular location is the cytoplasm. The catalysed reaction is N(2)-formyl-N(1)-(5-phospho-beta-D-ribosyl)glycinamide + L-glutamine + ATP + H2O = 2-formamido-N(1)-(5-O-phospho-beta-D-ribosyl)acetamidine + L-glutamate + ADP + phosphate + H(+). It carries out the reaction L-glutamine + H2O = L-glutamate + NH4(+). The protein operates within purine metabolism; IMP biosynthesis via de novo pathway; 5-amino-1-(5-phospho-D-ribosyl)imidazole from N(2)-formyl-N(1)-(5-phospho-D-ribosyl)glycinamide: step 1/2. Functionally, part of the phosphoribosylformylglycinamidine synthase complex involved in the purines biosynthetic pathway. Catalyzes the ATP-dependent conversion of formylglycinamide ribonucleotide (FGAR) and glutamine to yield formylglycinamidine ribonucleotide (FGAM) and glutamate. The FGAM synthase complex is composed of three subunits. PurQ produces an ammonia molecule by converting glutamine to glutamate. PurL transfers the ammonia molecule to FGAR to form FGAM in an ATP-dependent manner. PurS interacts with PurQ and PurL and is thought to assist in the transfer of the ammonia molecule from PurQ to PurL. This chain is Phosphoribosylformylglycinamidine synthase subunit PurQ, found in Methanosarcina acetivorans (strain ATCC 35395 / DSM 2834 / JCM 12185 / C2A).